Consider the following 189-residue polypeptide: MSKPTREEAKEAVRTLLKFIGEDPSREGLLKTPDRVINSYAEIFSGYGKDVAEILNTKFYETCNFRDFILLNIKFTSFCEHHILPFNGTVDIAYVPDNCIVGISKLARIVNIFARRLQIQEKMTVQIAESVQENLKPLGVAVKISAVHSCMSMRGVMQDNSVMNTMHYTGIFAEQQKYRHEFLNFTAKR.

Zn(2+) contacts are provided by C79, H82, and C150.

Belongs to the GTP cyclohydrolase I family. Homomer.

It carries out the reaction GTP + H2O = 7,8-dihydroneopterin 3'-triphosphate + formate + H(+). It participates in cofactor biosynthesis; 7,8-dihydroneopterin triphosphate biosynthesis; 7,8-dihydroneopterin triphosphate from GTP: step 1/1. This is GTP cyclohydrolase 1 from Rickettsia peacockii (strain Rustic).